Consider the following 259-residue polypeptide: tRNA-cytidine(32) 2-sulfurtransferase (259 aa).

A PP-loop motif motif is present at residues 37–42 (SGGKDS). [4Fe-4S] cluster contacts are provided by Cys112, Cys115, and Cys202.

It belongs to the TtcA family. As to quaternary structure, homodimer. Requires Mg(2+) as cofactor. [4Fe-4S] cluster is required as a cofactor.

The protein localises to the cytoplasm. It carries out the reaction cytidine(32) in tRNA + S-sulfanyl-L-cysteinyl-[cysteine desulfurase] + AH2 + ATP = 2-thiocytidine(32) in tRNA + L-cysteinyl-[cysteine desulfurase] + A + AMP + diphosphate + H(+). It participates in tRNA modification. Its function is as follows. Catalyzes the ATP-dependent 2-thiolation of cytidine in position 32 of tRNA, to form 2-thiocytidine (s(2)C32). The sulfur atoms are provided by the cysteine/cysteine desulfurase (IscS) system. This Syntrophotalea carbinolica (strain DSM 2380 / NBRC 103641 / GraBd1) (Pelobacter carbinolicus) protein is tRNA-cytidine(32) 2-sulfurtransferase.